A 165-amino-acid polypeptide reads, in one-letter code: Lipoprotein signal peptidase (165 aa).

3 helical membrane-spanning segments follow: residues Phe-9–Tyr-29, Lys-69–Leu-89, and Ile-98–Phe-118. Catalysis depends on residues Asp-124 and Asp-142. The helical transmembrane segment at Trp-133 to Ile-153 threads the bilayer.

The protein belongs to the peptidase A8 family.

The protein resides in the cell inner membrane. The enzyme catalyses Release of signal peptides from bacterial membrane prolipoproteins. Hydrolyzes -Xaa-Yaa-Zaa-|-(S,diacylglyceryl)Cys-, in which Xaa is hydrophobic (preferably Leu), and Yaa (Ala or Ser) and Zaa (Gly or Ala) have small, neutral side chains.. It functions in the pathway protein modification; lipoprotein biosynthesis (signal peptide cleavage). In terms of biological role, this protein specifically catalyzes the removal of signal peptides from prolipoproteins. This Chlamydia abortus (strain DSM 27085 / S26/3) (Chlamydophila abortus) protein is Lipoprotein signal peptidase.